A 212-amino-acid polypeptide reads, in one-letter code: Ribosomal RNA small subunit methyltransferase G (212 aa).

S-adenosyl-L-methionine-binding positions include Gly-80, Leu-85, 131 to 132 (AE), and Arg-146.

It belongs to the methyltransferase superfamily. RNA methyltransferase RsmG family.

The protein resides in the cytoplasm. It catalyses the reaction guanosine(527) in 16S rRNA + S-adenosyl-L-methionine = N(7)-methylguanosine(527) in 16S rRNA + S-adenosyl-L-homocysteine. Its function is as follows. Specifically methylates the N7 position of guanine in position 527 of 16S rRNA. The chain is Ribosomal RNA small subunit methyltransferase G from Xanthomonas oryzae pv. oryzae (strain KACC10331 / KXO85).